A 121-amino-acid chain; its full sequence is Ribosome-binding factor A (121 aa).

It belongs to the RbfA family. In terms of assembly, monomer. Binds 30S ribosomal subunits, but not 50S ribosomal subunits or 70S ribosomes.

It localises to the cytoplasm. One of several proteins that assist in the late maturation steps of the functional core of the 30S ribosomal subunit. Associates with free 30S ribosomal subunits (but not with 30S subunits that are part of 70S ribosomes or polysomes). Required for efficient processing of 16S rRNA. May interact with the 5'-terminal helix region of 16S rRNA. The sequence is that of Ribosome-binding factor A from Heliobacterium modesticaldum (strain ATCC 51547 / Ice1).